The chain runs to 1904 residues: Pericentriolar material 1 protein (1904 aa).

Disordered stretches follow at residues Met1–Pro135, Gln159–Glu179, His265–Glu303, Asn338–Ala361, Asn376–Gln407, Ser430–Asn489, and Cys520–Val559. Residues Arg43–Leu60 are compositionally biased toward basic and acidic residues. Positions Ile107–Asn118 are enriched in polar residues. Positions Ser171–Ala212 form a coiled coil. Residues Glu280–Glu298 show a composition bias toward polar residues. The stretch at Ser301 to Gln334 forms a coiled coil. Positions Asn338–Pro348 are enriched in low complexity. Over residues Gln349–Ala361 the composition is skewed to polar residues. The stretch at Thr403 to Thr429 forms a coiled coil. Acidic residues predominate over residues Lys442–Ser452. Positions Pro461–Gly470 are enriched in polar residues. The segment covering Ile471 to Asn482 has biased composition (low complexity). Positions Cys520–Gly534 are enriched in basic and acidic residues. The segment covering Glu535–Ala544 has biased composition (acidic residues). 2 coiled-coil regions span residues Asp562 to Asp592 and Leu636 to Ala686. Residues Ala686 to Met706 form a disordered region. Positions Gly687–Met706 are enriched in polar residues. Residues Ser731–Ser768 adopt a coiled-coil conformation. Residues Ser773–Tyr840 are disordered. The segment covering Ser779–Cys804 has biased composition (polar residues). Acidic residues predominate over residues Leu806 to Ala830. Coiled coils occupy residues Ser895–Leu927 and Thr970–Lys1000. Disordered regions lie at residues His991–Phe1018, Gly1063–Lys1082, and Phe1088–Asp1225. Polar residues-rich tracts occupy residues Phe1064 to His1073 and Glu1093 to Asn1102. Residues Gln1103 to Ser1117 are compositionally biased toward basic and acidic residues. Over residues Ser1141 to Lys1150 the composition is skewed to polar residues. The span at Asn1151–Asp1162 shows a compositional bias: basic and acidic residues. Over residues Pro1173–Thr1182 the composition is skewed to low complexity. Residues Ile1421–Glu1447 are a coiled coil. The span at Ala1616–Thr1625 shows a compositional bias: basic and acidic residues. 3 disordered regions span residues Ala1616–Glu1741, Met1774–Asp1838, and Glu1865–Ala1904. A compositionally biased stretch (acidic residues) spans Ser1649 to Glu1658. A compositionally biased stretch (polar residues) spans Lys1668–Gly1678. Acidic residues predominate over residues Gly1680–Pro1695. 3 stretches are compositionally biased toward polar residues: residues Val1698–Leu1720, Ile1728–Asn1737, and Ser1779–Leu1791. Low complexity predominate over residues Ser1800–Ser1812. The segment covering Glu1881–Glu1897 has biased composition (basic and acidic residues).

Belongs to the PCM1 family. As to quaternary structure, self-associates.

The protein localises to the cytoplasm. It is found in the cytoskeleton. The protein resides in the microtubule organizing center. Its subcellular location is the centrosome. It localises to the cytoplasmic granule. The protein localises to the centriolar satellite. It is found in the cilium basal body. Functionally, required for centrosome assembly and function. Essential for the correct localization of several centrosomal proteins including CETN3 and PCNT. Required to anchor microtubules to the centrosome. Probably involved in the biogenesis of cilia. This Gallus gallus (Chicken) protein is Pericentriolar material 1 protein (PCM1).